The primary structure comprises 147 residues: UPF0306 protein YhbP (147 aa).

It belongs to the UPF0306 family.

This Escherichia coli O8 (strain IAI1) protein is UPF0306 protein YhbP.